The chain runs to 202 residues: Cytochrome c oxidase assembly protein CtaG (202 aa).

Residues 1–13 (MSDKAAAPKKQGR) are Cytoplasmic-facing. The chain crosses the membrane as a helical; Signal-anchor for type II membrane protein span at residues 14–36 (NNGAVVLMCLSFVFGMGAMSYAA). The Periplasmic segment spans residues 37 to 202 (VPLYRIFCQV…GGAEKVEKKL (166 aa)). The disordered stretch occupies residues 183-202 (EGPKPLASNEGGAEKVEKKL).

It belongs to the COX11/CtaG family.

The protein resides in the cell inner membrane. Exerts its effect at some terminal stage of cytochrome c oxidase synthesis, probably by being involved in the insertion of the copper B into subunit I. This is Cytochrome c oxidase assembly protein CtaG from Rhizobium etli (strain CIAT 652).